We begin with the raw amino-acid sequence, 255 residues long: Lactose phosphotransferase system repressor (255 aa).

Positions 3 to 58 constitute an HTH deoR-type domain; the sequence is KKRRLEKILDMLKIDGTITIKEIIDELDISDMTARRDLDALEADGLLTRTHGGAQL. Positions 20-39 form a DNA-binding region, H-T-H motif; the sequence is ITIKEIIDELDISDMTARRD.

Functionally, repressor of the lactose catabolism operon. Galactose-6-phosphate is the inducer. The polypeptide is Lactose phosphotransferase system repressor (lacR) (Lactococcus lactis subsp. lactis (Streptococcus lactis)).